The sequence spans 1460 residues: Venom prothrombin activator omicarin-C non-catalytic subunit (1460 aa).

The N-terminal stretch at 1 to 30 is a signal peptide; that stretch reads MGRYSVSPVPKCLLLMFLGWSGLKYYQVNA. 4 consecutive Plastocyanin-like domains span residues 32 to 196, 206 to 330, 351 to 529, and 539 to 685; these read QLRE…LLIC, AQKF…LNIK, MNWE…LLVC, and VQNK…FLDA. 2 F5/8 type A domains span residues 32-330 and 350-685; these read QLRE…LNIK and IMNW…FLDA. Ca(2+) is bound by residues K124, E139, D142, and D143. N-linked (GlcNAc...) asparagine glycosylation is present at N156. A disulfide bridge connects residues C170 and C196. Residues N242, N300, N385, N406, and N471 are each glycosylated (N-linked (GlcNAc...) asparagine). An intrachain disulfide couples C251 to C332. The cysteines at positions 503 and 529 are disulfide-linked. The N-linked (GlcNAc...) asparagine glycan is linked to N557. 4 cysteine pairs are disulfide-bonded: C672-C1031, C965-C991, C1147-C1298, and C1303-C1457. Residues 693-817 are b; it reads GNEEEEEDDG…SDDIAGRYLR (125 aa). The segment at 740–760 is disordered; that stretch reads LLDDEDNPEQSRSEQTEDDEE. The propeptide at 772–817 is activation peptide (connecting region); the sequence is SFKGSVAEEELKHTALALEEDAHASDPRIDSNSARNSDDIAGRYLR. 2 consecutive Plastocyanin-like domains span residues 823-991 and 1000-1143; these read NKRR…ILIC and NRTI…FTVI. One can recognise an F5/8 type A 3 domain in the interval 823-1143; sequence NKRRYYIAAE…RGMQALFTVI (321 aa). The Ca(2+) site is built by K919, F934, D937, and D938. N-linked (GlcNAc...) asparagine glycosylation occurs at N943. 3 N-linked (GlcNAc...) asparagine glycosylation sites follow: N1000, N1180, and N1397. 2 F5/8 type C domains span residues 1147 to 1298 and 1303 to 1457; these read CKLP…LLGC and CSVP…LFGC.

This sequence belongs to the multicopper oxidase family. In terms of assembly, heterodimer of a light and a heavy chains; non-disulfide-linked. The interaction between the two chains is calcium-dependent. Found in its active form associated with omicarin-C catalytic subunit (AC Q58L95). In terms of processing, in physiological conditions, blood coagulation factor V and factor Va are inactivated by activated protein C (APC) through proteolytic degradation of the heavy chain. However, omicarin-C non-catalytic subunit (factor V-like protein) retains its full activity even at high concentration of APC. This has two explanations: this protein has only one of the three cleavage sites present in factor V that are targeted by the APC for inactivation, and the binding with the catalytic subunit protect the cleavage site from inactivation. In terms of tissue distribution, expressed by the venom gland.

Its subcellular location is the secreted. Its function is as follows. Snake prothrombin activator that attacks the hemostatic system of prey. This non-catalytic subunit is functionally similar to blood coagulation factor V. It serves as a critical cofactor for the prothrombinase activity of the catalytic subunit, which is similar to the blood coagulation factor X. The complex converts prothrombin to thrombin by sequential cleavage at two positions, Arg-320 followed by Arg-271. Cleavage at Arg-320 produces an active intermediate known as meizothrombin. Meizothrombin is the 'second' substrate for prothrombinase, and it docks in an altered manner to present the second cleavage site (271). Cleavage at Arg-271 releases active thrombin from its pro-fragment. This order of events is reversed if the protease component of prothrombinase is used on its own, suggesting that the 271 site is inherently more accessible to proteolysis. The polypeptide is Venom prothrombin activator omicarin-C non-catalytic subunit (Oxyuranus microlepidotus (Inland taipan)).